A 218-amino-acid chain; its full sequence is Small ribosomal subunit protein uS3 (218 aa).

Residues 38–107 (VREYIEKRLK…RVHVNVVEVK (70 aa)) enclose the KH type-2 domain.

It belongs to the universal ribosomal protein uS3 family. As to quaternary structure, part of the 30S ribosomal subunit. Forms a tight complex with proteins S10 and S14.

Binds the lower part of the 30S subunit head. Binds mRNA in the 70S ribosome, positioning it for translation. The polypeptide is Small ribosomal subunit protein uS3 (Exiguobacterium sibiricum (strain DSM 17290 / CCUG 55495 / CIP 109462 / JCM 13490 / 255-15)).